The sequence spans 205 residues: N-(5'-phosphoribosyl)anthranilate isomerase (205 aa).

The protein belongs to the TrpF family.

It carries out the reaction N-(5-phospho-beta-D-ribosyl)anthranilate = 1-(2-carboxyphenylamino)-1-deoxy-D-ribulose 5-phosphate. Its pathway is amino-acid biosynthesis; L-tryptophan biosynthesis; L-tryptophan from chorismate: step 3/5. In Maridesulfovibrio salexigens (strain ATCC 14822 / DSM 2638 / NCIMB 8403 / VKM B-1763) (Desulfovibrio salexigens), this protein is N-(5'-phosphoribosyl)anthranilate isomerase.